Consider the following 160-residue polypeptide: Large ribosomal subunit protein uL15 (160 aa).

Positions 1–11 (MKLNELRDNHG) are enriched in basic and acidic residues. Residues 1–39 (MKLNELRDNHGARPKSKRLGRGIGSGKGKTSGKGVKGQK) form a disordered region. A compositionally biased stretch (gly residues) spans 21–35 (RGIGSGKGKTSGKGV).

It belongs to the universal ribosomal protein uL15 family. Part of the 50S ribosomal subunit.

Functionally, binds to the 23S rRNA. This Granulibacter bethesdensis (strain ATCC BAA-1260 / CGDNIH1) protein is Large ribosomal subunit protein uL15.